A 184-amino-acid polypeptide reads, in one-letter code: Mitochondrial import inner membrane translocase subunit Tim22 (184 aa).

2 disulfide bridges follow: cysteine 59–cysteine 131 and cysteine 150–cysteine 169. The next 3 helical transmembrane spans lie at 64–84 (ALAC…TAGI), 115–133 (YAKN…ECLV), and 160–180 (AGLK…AVID).

This sequence belongs to the Tim17/Tim22/Tim23 family. As to quaternary structure, core component of the TIM22 complex.

It is found in the mitochondrion inner membrane. Its function is as follows. Essential core component of the TIM22 complex, a complex that mediates the import and insertion of multi-pass transmembrane proteins into the mitochondrial inner membrane. In the TIM22 complex, it constitutes the voltage-activated and signal-gated channel. Forms a twin-pore translocase that uses the membrane potential as external driving force in 2 voltage-dependent steps. This chain is Mitochondrial import inner membrane translocase subunit Tim22 (timm22), found in Xenopus laevis (African clawed frog).